The primary structure comprises 507 residues: Xaa-Pro aminopeptidase 3 (507 aa).

A mitochondrion-targeting transit peptide spans 1–31 (MPWLLSAPKLVPAVANVRGLSGCMLCSQRRY). The interval 54 to 79 (HPHLLRPGEVTPGLSQVEYALRRHKL) is interaction with TNFRSF1B. Residues Tyr300, Asp331, Asp342, His424, His431, Glu451, and Glu475 each coordinate substrate. Residues Asp331, Asp342, and His424 each contribute to the Mn(2+) site. Mn(2+) contacts are provided by Glu451 and Glu475.

Belongs to the peptidase M24B family. Homodimer. Isoform 1 interacts with TNFRSF1B/TNFR2 (activated) and TRAF2. Mn(2+) serves as cofactor. In terms of tissue distribution, isoform 1 and isoform 2 are widely expressed, with isoform 1 being more abundant.

It is found in the mitochondrion. The protein localises to the cytoplasm. The catalysed reaction is Release of any N-terminal amino acid, including proline, that is linked to proline, even from a dipeptide or tripeptide.. Catalyzes the removal of a penultimate prolyl residue from the N-termini of peptides, such as Leu-Pro-Ala. Also shows low activity towards peptides with Ala or Ser at the P1 position. In terms of biological role, promotes TNFRSF1B-mediated phosphorylation of MAPK8/JNK1 and MAPK9/JNK2, suggesting a function as an adapter protein for TNFRSF1B; the effect is independent of XPNPEP3 peptidase activity. May inhibit apoptotic cell death induced via TNF-TNFRSF1B signaling. The chain is Xaa-Pro aminopeptidase 3 (XPNPEP3) from Homo sapiens (Human).